The following is a 310-amino-acid chain: Receptor homology region, transmembrane domain- and RING domain-containing protein 1 (310 aa).

Positions 1 to 25 (MRLVVSSCLLVAAPFLSSLLRVSLA) are cleaved as a signal peptide. The Lumenal segment spans residues 26–168 (TVVLNSISAS…NPPDRGSAWT (143 aa)). Cys65 and Cys92 are joined by a disulfide. The N-linked (GlcNAc...) asparagine glycan is linked to Asn75. Positions 81–149 (TTKFALIIRG…VAGEILRKYA (69 aa)) constitute a PA domain. Residues 169-189 (VLAISFFSLLLIVTFLLIAFF) traverse the membrane as a helical segment. Over 190–310 (APRHWTQWRG…FAFAQSSQSR (121 aa)) the chain is Cytoplasmic. Residues 232–274 (CAICLEDYRFGESLRLLPCQHAFHLNCIDSWLTKWGTSCPVCK) form an RING-type; atypical zinc finger. Basic and acidic residues predominate over residues 284–293 (SEVHKRESPR). The disordered stretch occupies residues 284–310 (SEVHKRESPRTDTSTSRFAFAQSSQSR). Residues 294 to 310 (TDTSTSRFAFAQSSQSR) show a composition bias toward polar residues.

In terms of tissue distribution, expressed in leaves, stems, flowers and siliques.

The protein localises to the prevacuolar compartment membrane. It is found in the protein storage vacuole membrane. It localises to the golgi apparatus membrane. In terms of biological role, involved in the trafficking of vacuolar proteins. Functions probably as a sorting receptor for protein trafficking to the protein storage vacuole (PSV) by binding the C-terminal vacuolar sorting determinant (VSD) of vacuolar-sorted proteins. The protein is Receptor homology region, transmembrane domain- and RING domain-containing protein 1 (RMR1) of Arabidopsis thaliana (Mouse-ear cress).